Reading from the N-terminus, the 157-residue chain is uncharacterized protein (157 aa).

This is an uncharacterized protein from Schizosaccharomyces pombe (strain 972 / ATCC 24843) (Fission yeast).